The following is a 600-amino-acid chain: KIF-binding protein (600 aa).

Residues K384–L434 are a coiled coil.

It belongs to the KIF-binding protein family.

Its subcellular location is the cytoplasm. The protein localises to the cytoskeleton. This chain is KIF-binding protein, found in Drosophila melanogaster (Fruit fly).